The sequence spans 289 residues: Nucleotide-binding protein Francci3_1634 (289 aa).

Residue 13–20 (GLSGAGRS) coordinates ATP. Position 64 to 67 (64 to 67 (DVRG)) interacts with GTP.

It belongs to the RapZ-like family.

Its function is as follows. Displays ATPase and GTPase activities. This chain is Nucleotide-binding protein Francci3_1634, found in Frankia casuarinae (strain DSM 45818 / CECT 9043 / HFP020203 / CcI3).